Reading from the N-terminus, the 121-residue chain is Fumarate reductase subunit D (121 aa).

Helical transmembrane passes span 22 to 42 (GVWF…LLPL), 57 to 77 (AFVS…LPMW), and 100 to 120 (YACY…VIQL).

The protein belongs to the FrdD family. Part of an enzyme complex containing four subunits: a flavoprotein (FrdA), an iron-sulfur protein (FrdB), and two hydrophobic anchor proteins (FrdC and FrdD).

The protein resides in the cell inner membrane. Functionally, anchors the catalytic components of the fumarate reductase complex to the cell membrane, binds quinones. The sequence is that of Fumarate reductase subunit D from Shewanella putrefaciens (strain CN-32 / ATCC BAA-453).